The primary structure comprises 473 residues: MAMAKLAIFTTLMAILVMTSQGRIPTEGGEKEAEADRITSLPGQPNVTFEQFSGYVTVDKLSGRSLFYWLTEASDLPLSKPLVIWLNGGPGCSSVAYGASEEIGPFRISKGGSGLYLNKFAWNSISNLLFLEAPAGVGFSYTNRSSDLFNTGDRRTAKDSLQFLIQWLHRFPRYNHREIYITGESYAGHYVPQLAKEIMNYNKRSKNPLNLKGIMVGNAVTDNHYDNLGTVSYWWSHAMISDRTYHQLISTCDFSRQKESDECETLYSYAMEQEFGNIDQYNIYAPPCNKSSDGGGSYNGSSGRRSMRLPHLPHSVLRKISGYDPCTERYAEIYYNRPDVQKALHANTTKIPYKWTACSEVLNRNWNDTDSTVLPIYREMIAGGIRVWVFSGDVDSVVPVTATRYSLARLSLSTKLPWYPWYVKKQVGGWTEVYEGLTFVTVRGAGHEVPLFKPRAAFELFKYFLRGKPLPKA.

The first 22 residues, 1–22, serve as a signal peptide directing secretion; sequence MAMAKLAIFTTLMAILVMTSQG. N-linked (GlcNAc...) asparagine glycosylation is found at N46 and N143. Cystine bridges form between C92/C358, C252/C263, and C288/C326. Residue S185 is part of the active site. N-linked (GlcNAc...) asparagine glycosylation is found at N289, N299, N347, and N367. Catalysis depends on residues D395 and H447.

The protein belongs to the peptidase S10 family. Ubiquitous.

It is found in the secreted. Probable carboxypeptidase. The polypeptide is Serine carboxypeptidase-like 25 (SCPL25) (Arabidopsis thaliana (Mouse-ear cress)).